A 791-amino-acid chain; its full sequence is Phenylalanine--tRNA ligase beta subunit (791 aa).

The tRNA-binding domain occupies 39-147 (GDALGQVVVA…DDAPVGQALA (109 aa)). Positions 400–475 (PQPASILLRR…RIHGYDRVPT (76 aa)) constitute a B5 domain. Residues aspartate 453, aspartate 459, glutamate 462, and glutamate 463 each coordinate Mg(2+). Residues 697 to 790 (SRYPSMRRDL…IEREHRARIR (94 aa)) form the FDX-ACB domain.

This sequence belongs to the phenylalanyl-tRNA synthetase beta subunit family. Type 1 subfamily. In terms of assembly, tetramer of two alpha and two beta subunits. It depends on Mg(2+) as a cofactor.

It is found in the cytoplasm. It catalyses the reaction tRNA(Phe) + L-phenylalanine + ATP = L-phenylalanyl-tRNA(Phe) + AMP + diphosphate + H(+). The polypeptide is Phenylalanine--tRNA ligase beta subunit (Xanthomonas campestris pv. campestris (strain 8004)).